The sequence spans 272 residues: B3 domain-containing protein Os10g0323000 (272 aa).

Positions 39 to 132 (RYGENRKHGQ…TLDLLILDKH (94 aa)) form a DNA-binding region, TF-B3 1. The tract at residues 139 to 171 (PPSKRDLKLKSKRSTHQDSKGHPSNTDPGPSRI) is disordered. Residues 141 to 159 (SKRDLKLKSKRSTHQDSKG) show a composition bias toward basic and acidic residues. A DNA-binding region (TF-B3 2) is located at residues 180-272 (ESSANTQLLV…THLGVIVDIF (93 aa)).

It localises to the nucleus. The sequence is that of B3 domain-containing protein Os10g0323000 from Oryza sativa subsp. japonica (Rice).